The chain runs to 297 residues: Lipoyl synthase (297 aa).

C40, C45, C51, C67, C71, C74, and S280 together coordinate [4Fe-4S] cluster. Positions 53–269 (AVRKTATFMI…KEIALSKGFS (217 aa)) constitute a Radical SAM core domain.

Belongs to the radical SAM superfamily. Lipoyl synthase family. Requires [4Fe-4S] cluster as cofactor.

The protein resides in the cytoplasm. The catalysed reaction is [[Fe-S] cluster scaffold protein carrying a second [4Fe-4S](2+) cluster] + N(6)-octanoyl-L-lysyl-[protein] + 2 oxidized [2Fe-2S]-[ferredoxin] + 2 S-adenosyl-L-methionine + 4 H(+) = [[Fe-S] cluster scaffold protein] + N(6)-[(R)-dihydrolipoyl]-L-lysyl-[protein] + 4 Fe(3+) + 2 hydrogen sulfide + 2 5'-deoxyadenosine + 2 L-methionine + 2 reduced [2Fe-2S]-[ferredoxin]. The protein operates within protein modification; protein lipoylation via endogenous pathway; protein N(6)-(lipoyl)lysine from octanoyl-[acyl-carrier-protein]. Its function is as follows. Catalyzes the radical-mediated insertion of two sulfur atoms into the C-6 and C-8 positions of the octanoyl moiety bound to the lipoyl domains of lipoate-dependent enzymes, thereby converting the octanoylated domains into lipoylated derivatives. The protein is Lipoyl synthase of Bacillus cereus (strain ATCC 14579 / DSM 31 / CCUG 7414 / JCM 2152 / NBRC 15305 / NCIMB 9373 / NCTC 2599 / NRRL B-3711).